The chain runs to 126 residues: MPEPAKSAPAPKKGSKKAVTKAQKKDGKKRKRSRKESYSVYVYKVLKQVHPDTGISSKAMGIMNSFVNDIFERIASEASRLAHYNKRSTITSREIQTAVRLLLPGELAKHAVSEGTKAVTKYTSAK.

Over residues 1-12 (MPEPAKSAPAPK) the composition is skewed to low complexity. A disordered region spans residues 1–36 (MPEPAKSAPAPKKGSKKAVTKAQKKDGKKRKRSRKE). P2 is modified (N-acetylproline). An ADP-ribosyl glutamic acid modification is found at E3. Position 6 is an N6-(2-hydroxyisobutyryl)lysine; alternate (K6). K6 carries the post-translational modification N6-(beta-hydroxybutyryl)lysine; alternate. At K6 the chain carries N6-acetyllysine; alternate. K6 is modified (N6-butyryllysine; alternate). Position 6 is an N6-crotonyllysine; alternate (K6). Position 6 is an N6-lactoyllysine; alternate (K6). A Glycyl lysine isopeptide (Lys-Gly) (interchain with G-Cter in SUMO2); alternate cross-link involves residue K6. S7 carries the post-translational modification ADP-ribosylserine. Position 12 is an N6-(beta-hydroxybutyryl)lysine; alternate (K12). K12 and K13 each carry N6-acetyllysine; alternate. An N6-crotonyllysine; alternate mark is found at K12 and K13. K12 bears the N6-lactoyllysine; alternate mark. N6-(2-hydroxyisobutyryl)lysine; alternate is present on K13. Position 15 is a phosphoserine; by STK4/MST1 (S15). K16, K17, K21, and K24 each carry N6-acetyllysine; alternate. An N6-crotonyllysine; alternate mark is found at K16, K17, K21, and K24. N6-lactoyllysine; alternate occurs at positions 16, 17, 21, and 24. K17 bears the N6-glutaryllysine; alternate mark. N6-(2-hydroxyisobutyryl)lysine; alternate occurs at positions 21 and 24. K21 carries the N6-(beta-hydroxybutyryl)lysine; alternate modification. Residue K21 is modified to N6-butyryllysine; alternate. K21 participates in a covalent cross-link: Glycyl lysine isopeptide (Lys-Gly) (interchain with G-Cter in SUMO2); alternate. K25 is modified (N6-(2-hydroxyisobutyryl)lysine). An N6-(2-hydroxyisobutyryl)lysine; alternate modification is found at K35. N6-(beta-hydroxybutyryl)lysine; alternate is present on K35. N6-crotonyllysine; alternate is present on K35. K35 carries the N6-glutaryllysine; alternate modification. An N6-succinyllysine; alternate modification is found at K35. A Glycyl lysine isopeptide (Lys-Gly) (interchain with G-Cter in ubiquitin); alternate cross-link involves residue K35. Position 36 is a polyADP-ribosyl glutamic acid (E36). At S37 the chain carries Phosphoserine; by AMPK. N6-(2-hydroxyisobutyryl)lysine; alternate occurs at positions 44, 47, and 58. An N6-lactoyllysine; alternate modification is found at K44. An N6-glutaryllysine; alternate mark is found at K44 and K47. Residue K47 is modified to N6-methyllysine; alternate. K58 carries the N6,N6-dimethyllysine; alternate modification. At R80 the chain carries Dimethylated arginine. Position 86 is an N6-(2-hydroxyisobutyryl)lysine; alternate (K86). N6-acetyllysine; alternate is present on K86. K86 is modified (N6-lactoyllysine; alternate). K86 bears the N6,N6,N6-trimethyllysine; alternate mark. 2 positions are modified to omega-N-methylarginine: R87 and R93. K109 carries the N6-(2-hydroxyisobutyryl)lysine; alternate modification. K109 is subject to N6-(beta-hydroxybutyryl)lysine; alternate. K109 bears the N6-lactoyllysine; alternate mark. K109 carries the N6-glutaryllysine; alternate modification. K109 carries the post-translational modification N6-methyllysine; alternate. O-linked (GlcNAc) serine glycosylation occurs at S113. Phosphothreonine is present on T116. Residues K117 and K121 each carry the N6-(2-hydroxyisobutyryl)lysine; alternate modification. K117 carries the post-translational modification N6-(beta-hydroxybutyryl)lysine; alternate. N6-lactoyllysine; alternate occurs at positions 117 and 121. 2 positions are modified to N6-glutaryllysine; alternate: K117 and K121. An N6-succinyllysine; alternate mark is found at K117 and K121. K117 is subject to N6-methylated lysine; alternate. A Glycyl lysine isopeptide (Lys-Gly) (interchain with G-Cter in ubiquitin); alternate cross-link involves residue K121.

The protein belongs to the histone H2B family. In terms of assembly, the nucleosome is a histone octamer containing two molecules each of H2A, H2B, H3 and H4 assembled in one H3-H4 heterotetramer and two H2A-H2B heterodimers. The octamer wraps approximately 147 bp of DNA. Monoubiquitination at Lys-35 (H2BK34Ub) by the MSL1/MSL2 dimer is required for histone H3 'Lys-4' (H3K4me) and 'Lys-79' (H3K79me) methylation and transcription activation at specific gene loci, such as HOXA9 and MEIS1 loci. Similarly, monoubiquitination at Lys-121 (H2BK120Ub) by the RNF20/40 complex gives a specific tag for epigenetic transcriptional activation and is also prerequisite for histone H3 'Lys-4' and 'Lys-79' methylation. It also functions cooperatively with the FACT dimer to stimulate elongation by RNA polymerase II. H2BK120Ub also acts as a regulator of mRNA splicing: deubiquitination by USP49 is required for efficient cotranscriptional splicing of a large set of exons. Post-translationally, phosphorylated on Ser-15 (H2BS14ph) by STK4/MST1 during apoptosis; which facilitates apoptotic chromatin condensation. Also phosphorylated on Ser-15 in response to DNA double strand breaks (DSBs), and in correlation with somatic hypermutation and immunoglobulin class-switch recombination. Phosphorylation at Ser-37 (H2BS36ph) by AMPK in response to stress promotes transcription. In terms of processing, glcNAcylation at Ser-113 promotes monoubiquitination of Lys-121. It fluctuates in response to extracellular glucose, and associates with transcribed genes. ADP-ribosylated by PARP1 or PARP2 on Ser-7 (H2BS6ADPr) in response to DNA damage. H2BS6ADPr promotes recruitment of CHD1L. Mono-ADP-ribosylated on Glu-3 (H2BE2ADPr) by PARP3 in response to single-strand breaks. Poly ADP-ribosylation on Glu-36 (H2BE35ADPr) by PARP1 regulates adipogenesis: it inhibits phosphorylation at Ser-37 (H2BS36ph), thereby blocking expression of pro-adipogenetic genes. Post-translationally, crotonylation (Kcr) is specifically present in male germ cells and marks testis-specific genes in post-meiotic cells, including X-linked genes that escape sex chromosome inactivation in haploid cells. Crotonylation marks active promoters and enhancers and confers resistance to transcriptional repressors. It is also associated with post-meiotically activated genes on autosomes. In terms of processing, hydroxybutyrylation of histones is induced by starvation. Lactylated in macrophages by EP300/P300 by using lactoyl-CoA directly derived from endogenous or exogenous lactate, leading to stimulates gene transcription.

It localises to the nucleus. The protein resides in the chromosome. In terms of biological role, core component of nucleosome. Nucleosomes wrap and compact DNA into chromatin, limiting DNA accessibility to the cellular machineries which require DNA as a template. Histones thereby play a central role in transcription regulation, DNA repair, DNA replication and chromosomal stability. DNA accessibility is regulated via a complex set of post-translational modifications of histones, also called histone code, and nucleosome remodeling. The polypeptide is Histone H2B type 1-K (Mus musculus (Mouse)).